We begin with the raw amino-acid sequence, 173 residues long: Signal peptidase complex catalytic subunit sec11 (173 aa).

The Cytoplasmic portion of the chain corresponds to 1–15 (MLGIADMQPRQLAAQ). Residues 16–36 (ILNFALVLSTAFMMWKGLSVV) form a helical; Signal-anchor for type II membrane protein membrane-spanning segment. The Lumenal segment spans residues 37–173 (SDSPSPIVVV…MGVMVVLQRE (137 aa)). Catalysis depends on charge relay system residues Ser50, His89, and Asp115. Residues 159–170 (VMLGLMGVMVVL) are C-terminal short (CTS) helix.

This sequence belongs to the peptidase S26B family. Component of the signal peptidase complex (SPC) composed of a catalytic subunit SEC11 and three accessory subunits SPC1, SPC2 and SPC3. The complex induces a local thinning of the ER membrane which is used to measure the length of the signal peptide (SP) h-region of protein substrates. This ensures the selectivity of the complex towards h-regions shorter than 18-20 amino acids. SPC associates with the translocon complex.

The protein localises to the endoplasmic reticulum membrane. The catalysed reaction is Cleavage of hydrophobic, N-terminal signal or leader sequences from secreted and periplasmic proteins.. Its function is as follows. Catalytic component of the signal peptidase complex (SPC) which catalyzes the cleavage of N-terminal signal sequences from nascent proteins as they are translocated into the lumen of the endoplasmic reticulum. Specifically cleaves N-terminal signal peptides that contain a hydrophobic alpha-helix (h-region) shorter than 18-20 amino acids. The polypeptide is Signal peptidase complex catalytic subunit sec11 (sec11) (Pyrenophora tritici-repentis (strain Pt-1C-BFP) (Wheat tan spot fungus)).